A 366-amino-acid polypeptide reads, in one-letter code: Probable cinnamyl alcohol dehydrogenase 3 (366 aa).

Cys-53 provides a ligand contact to Zn(2+). Ser-55 serves as a coordination point for NADP(+). The Zn(2+) site is built by His-75, Glu-76, Cys-106, Cys-109, Cys-112, Cys-120, and Cys-169. NADP(+) is bound by residues Thr-173, 194–199, 217–222, Thr-257, Gly-281, and 304–306; these read GLGGLG, SSSPGK, and SNI.

It belongs to the zinc-containing alcohol dehydrogenase family. In terms of assembly, homodimer. It depends on Zn(2+) as a cofactor.

The catalysed reaction is (E)-cinnamyl alcohol + NADP(+) = (E)-cinnamaldehyde + NADPH + H(+). It catalyses the reaction (E)-coniferol + NADP(+) = (E)-coniferaldehyde + NADPH + H(+). It carries out the reaction (E)-sinapyl alcohol + NADP(+) = (E)-sinapaldehyde + NADPH + H(+). The enzyme catalyses (E)-4-coumaroyl alcohol + NADP(+) = (E)-4-coumaraldehyde + NADPH + H(+). The catalysed reaction is (E)-caffeyl alcohol + NADP(+) = (E)-caffeyl aldehyde + NADPH + H(+). The protein operates within aromatic compound metabolism; phenylpropanoid biosynthesis. In terms of biological role, involved in lignin biosynthesis. Catalyzes the final step specific for the production of lignin monomers. Catalyzes the NADPH-dependent reduction of coniferaldehyde, 5-hydroxyconiferaldehyde, sinapaldehyde, 4-coumaraldehyde and caffeyl aldehyde to their respective alcohols. The polypeptide is Probable cinnamyl alcohol dehydrogenase 3 (Oryza sativa subsp. japonica (Rice)).